The chain runs to 183 residues: ATP synthase subunit delta (183 aa).

The protein belongs to the ATPase delta chain family. As to quaternary structure, F-type ATPases have 2 components, F(1) - the catalytic core - and F(0) - the membrane proton channel. F(1) has five subunits: alpha(3), beta(3), gamma(1), delta(1), epsilon(1). F(0) has three main subunits: a(1), b(2) and c(10-14). The alpha and beta chains form an alternating ring which encloses part of the gamma chain. F(1) is attached to F(0) by a central stalk formed by the gamma and epsilon chains, while a peripheral stalk is formed by the delta and b chains.

The protein resides in the cell inner membrane. In terms of biological role, f(1)F(0) ATP synthase produces ATP from ADP in the presence of a proton or sodium gradient. F-type ATPases consist of two structural domains, F(1) containing the extramembraneous catalytic core and F(0) containing the membrane proton channel, linked together by a central stalk and a peripheral stalk. During catalysis, ATP synthesis in the catalytic domain of F(1) is coupled via a rotary mechanism of the central stalk subunits to proton translocation. This protein is part of the stalk that links CF(0) to CF(1). It either transmits conformational changes from CF(0) to CF(1) or is implicated in proton conduction. The chain is ATP synthase subunit delta from Verminephrobacter eiseniae (strain EF01-2).